A 533-amino-acid chain; its full sequence is Tyrosinase (533 aa).

Residues 1-18 (MFLAVLYCLLWSFQISDG) form the signal peptide. The Lumenal, melanosome segment spans residues 19 to 476 (HFPRACASSK…YLEQASRIWP (458 aa)). N-linked (GlcNAc...) asparagine glycans are attached at residues Asn-86, Asn-111, and Asn-161. Cu cation is bound by residues His-180, His-202, and His-211. Residues Asn-230 and Asn-337 are each glycosylated (N-linked (GlcNAc...) asparagine). Cu cation is bound by residues His-363 and His-367. Asn-371 carries an N-linked (GlcNAc...) asparagine glycan. Residue His-390 participates in Cu cation binding. A helical transmembrane segment spans residues 477-497 (WLLGAALVGAVIAAALSGLSS). Topologically, residues 498–533 (RLCLQKKKKKKQPQEERQPLLMDKDDYHSLLYQSHL) are cytoplasmic.

This sequence belongs to the tyrosinase family. Forms an OPN3-dependent complex with DCT in response to blue light in melanocytes. Cu(2+) serves as cofactor. In terms of processing, glycosylated. In terms of tissue distribution, expressed in the skin.

The protein localises to the melanosome membrane. Its subcellular location is the melanosome. It carries out the reaction 2 L-dopa + O2 = 2 L-dopaquinone + 2 H2O. The catalysed reaction is L-tyrosine + O2 = L-dopaquinone + H2O. The enzyme catalyses 2 5,6-dihydroxyindole-2-carboxylate + O2 = 2 indole-5,6-quinone-2-carboxylate + 2 H2O. Functionally, this is a copper-containing oxidase that functions in the formation of pigments such as melanins and other polyphenolic compounds. Catalyzes the initial and rate limiting step in the cascade of reactions leading to melanin production from tyrosine. In addition to hydroxylating tyrosine to DOPA (3,4-dihydroxyphenylalanine), also catalyzes the oxidation of DOPA to DOPA-quinone, and possibly the oxidation of DHI (5,6-dihydroxyindole) to indole-5,6 quinone. The protein is Tyrosinase (Tyr) of Mus musculus (Mouse).